The chain runs to 670 residues: Kinesin-like protein KIF2B (670 aa).

Threonine 122 carries the post-translational modification Phosphothreonine; by PLK1. A coiled-coil region spans residues cysteine 146 to leucine 173. Serine 201 bears the Phosphoserine; by PLK1 mark. One can recognise a Kinesin motor domain in the interval arginine 210–leucine 540. Residue glycine 300–threonine 307 coordinates ATP.

This sequence belongs to the TRAFAC class myosin-kinesin ATPase superfamily. Kinesin family. MCAK/KIF2 subfamily. In terms of processing, phosphorylation at Thr-122 by PLK1 is required for activity in the correction of kinetochore-microtubules attachment errors, while phosphorylation at Ser-201 also by PLK1 is required for the kinetochore localization and activity in prometaphase.

It is found in the cytoplasm. It localises to the cytoskeleton. Its subcellular location is the microtubule organizing center. The protein resides in the centrosome. The protein localises to the spindle. It is found in the chromosome. It localises to the centromere. Its subcellular location is the kinetochore. Functionally, plus end-directed microtubule-dependent motor required for spindle assembly and chromosome movement during mitosis. Has microtubule depolymerization activity. Plays a role in chromosome congression. The chain is Kinesin-like protein KIF2B (KIF2B) from Macaca fascicularis (Crab-eating macaque).